Consider the following 416-residue polypeptide: 4-hydroxy-3-methylbut-2-en-1-yl diphosphate synthase (flavodoxin) (416 aa).

[4Fe-4S] cluster contacts are provided by cysteine 304, cysteine 307, cysteine 350, and glutamate 357.

The protein belongs to the IspG family. Requires [4Fe-4S] cluster as cofactor.

The enzyme catalyses (2E)-4-hydroxy-3-methylbut-2-enyl diphosphate + oxidized [flavodoxin] + H2O + 2 H(+) = 2-C-methyl-D-erythritol 2,4-cyclic diphosphate + reduced [flavodoxin]. It participates in isoprenoid biosynthesis; isopentenyl diphosphate biosynthesis via DXP pathway; isopentenyl diphosphate from 1-deoxy-D-xylulose 5-phosphate: step 5/6. Functionally, converts 2C-methyl-D-erythritol 2,4-cyclodiphosphate (ME-2,4cPP) into 1-hydroxy-2-methyl-2-(E)-butenyl 4-diphosphate. The chain is 4-hydroxy-3-methylbut-2-en-1-yl diphosphate synthase (flavodoxin) from Rhizobium etli (strain ATCC 51251 / DSM 11541 / JCM 21823 / NBRC 15573 / CFN 42).